Here is a 453-residue protein sequence, read N- to C-terminus: MISFCPVCGKSVKVSFKFCPYCGKALPVEEDGGTQSAVTPHVSSVPGSRRDLNSSFETSPKKVKCSHTVTSLPLSRHSDCDSSGSDNTLTSPDRATGTRSRPLTPKGSPLSNRQSPQTLKRTRVTTSLQALATGTELTDQNGKHWTLGALQIRDDQGILYEAEPTSAVPSESRTQKWRFSLKLDSKDGRLFNEQNFFQRVAKPLQVNKWKKQFLLPLLAIPTCIGFGIHQDKYRFLVFPSLGRSLQSALDDNPKHVVSERCVLQVACRLLDALEYLHENEYVHGNLTAENVFVNPEDLSQVTLVGYGFTYRYCPGGKHVAYKEGSRSPHDGDLEFISMDLHKGCGPSRRSDLQTLGYCMLKWLYGSLPWTNCLPNTEKITRQKQKYLDSPERLVGLCGRWNKASETLREYLKVVMALNYEEKPPYATLRNSLEALLQDMRVSPYDPLDLQMVP.

Positions 30-123 (EDGGTQSAVT…QSPQTLKRTR (94 aa)) are disordered. Over residues 33–46 (GTQSAVTPHVSSVP) the composition is skewed to polar residues. Residues 49 to 64 (RRDLNSSFETSPKKVK) carry the Nuclear localization signal motif. 6 positions are modified to phosphoserine: Ser54, Ser55, Ser59, Ser82, Ser83, and Ser108. The segment covering 81 to 101 (DSSGSDNTLTSPDRATGTRSR) has biased composition (polar residues). Positions 109-123 (PLSNRQSPQTLKRTR) are enriched in polar residues. The region spanning 125-436 (TTSLQALATG…TLRNSLEALL (312 aa)) is the Protein kinase domain.

This sequence belongs to the protein kinase superfamily. CK1 Ser/Thr protein kinase family. VRK subfamily. Interacts with DUSP3. Interacts with RAN. Interacts with HSP70/HSPA1A. In terms of processing, phosphorylated at Ser-108 by CDK5; leading to protection of the cell against H2O2-induced apoptosis. Post-translationally, ubiquitinated by RNF144A. In terms of tissue distribution, expressed in liver, kidney, muscle, thymus, and bone marrow. Weakly expressed in spleen.

It localises to the nucleus. The protein resides in the cytoplasm. It catalyses the reaction L-seryl-[protein] + ATP = O-phospho-L-seryl-[protein] + ADP + H(+). In terms of biological role, plays a role in the regulation of the cell cycle by phosphorylating the nuclear envelope protein barrier-to-autointegration factor/BAF that is required for disassembly and reassembly, respectively, of the nuclear envelope during mitosis. Under normal physiological conditions, negatively regulates ERK activity along with VHR phosphatase in the nucleus, causing timely and transient action of ERK. Stress conditions activate CDK5 which phosphorylates VRK3 to increase VHR phosphatase activity and suppress prolonged ERK activation that causes cell death. For example, upon glutamate induction, promotes nuclear localization of HSP70/HSPA1A to inhibit ERK activation via VHR phosphatase. The chain is Serine/threonine-protein kinase VRK3 (Vrk3) from Mus musculus (Mouse).